Consider the following 231-residue polypeptide: 5'-methylthioadenosine/S-adenosylhomocysteine nucleosidase (231 aa).

Residue Glu12 is the Proton acceptor of the active site. Residues Gly78, Ile153, and 174–175 (ME) contribute to the substrate site. Residue Asp198 is the Proton donor of the active site.

Belongs to the PNP/UDP phosphorylase family. MtnN subfamily.

It carries out the reaction S-adenosyl-L-homocysteine + H2O = S-(5-deoxy-D-ribos-5-yl)-L-homocysteine + adenine. The enzyme catalyses S-methyl-5'-thioadenosine + H2O = 5-(methylsulfanyl)-D-ribose + adenine. The catalysed reaction is 5'-deoxyadenosine + H2O = 5-deoxy-D-ribose + adenine. Its pathway is amino-acid biosynthesis; L-methionine biosynthesis via salvage pathway; S-methyl-5-thio-alpha-D-ribose 1-phosphate from S-methyl-5'-thioadenosine (hydrolase route): step 1/2. Catalyzes the irreversible cleavage of the glycosidic bond in both 5'-methylthioadenosine (MTA) and S-adenosylhomocysteine (SAH/AdoHcy) to adenine and the corresponding thioribose, 5'-methylthioribose and S-ribosylhomocysteine, respectively. Also cleaves 5'-deoxyadenosine, a toxic by-product of radical S-adenosylmethionine (SAM) enzymes, into 5-deoxyribose and adenine. The sequence is that of 5'-methylthioadenosine/S-adenosylhomocysteine nucleosidase from Shewanella putrefaciens (strain CN-32 / ATCC BAA-453).